A 290-amino-acid polypeptide reads, in one-letter code: Lipoyl synthase (290 aa).

Residues C32, C37, C43, C58, C62, C65, and S272 each contribute to the [4Fe-4S] cluster site. Positions 44-261 (WGEGTATFMI…KEVAVSLGFK (218 aa)) constitute a Radical SAM core domain.

The protein belongs to the radical SAM superfamily. Lipoyl synthase family. [4Fe-4S] cluster serves as cofactor.

The protein localises to the cytoplasm. It carries out the reaction [[Fe-S] cluster scaffold protein carrying a second [4Fe-4S](2+) cluster] + N(6)-octanoyl-L-lysyl-[protein] + 2 oxidized [2Fe-2S]-[ferredoxin] + 2 S-adenosyl-L-methionine + 4 H(+) = [[Fe-S] cluster scaffold protein] + N(6)-[(R)-dihydrolipoyl]-L-lysyl-[protein] + 4 Fe(3+) + 2 hydrogen sulfide + 2 5'-deoxyadenosine + 2 L-methionine + 2 reduced [2Fe-2S]-[ferredoxin]. The protein operates within protein modification; protein lipoylation via endogenous pathway; protein N(6)-(lipoyl)lysine from octanoyl-[acyl-carrier-protein]: step 2/2. Its function is as follows. Catalyzes the radical-mediated insertion of two sulfur atoms into the C-6 and C-8 positions of the octanoyl moiety bound to the lipoyl domains of lipoate-dependent enzymes, thereby converting the octanoylated domains into lipoylated derivatives. The sequence is that of Lipoyl synthase from Pyrobaculum aerophilum (strain ATCC 51768 / DSM 7523 / JCM 9630 / CIP 104966 / NBRC 100827 / IM2).